A 603-amino-acid chain; its full sequence is Myotubularin (603 aa).

The span at 1 to 13 (MASASTSKYNSHS) shows a compositional bias: polar residues. A disordered region spans residues 1–25 (MASASTSKYNSHSLENESIKRTSRD). Residues Ser13 and Ser18 each carry the phosphoserine modification. Basic and acidic residues predominate over residues 14 to 25 (LENESIKRTSRD). The 69-residue stretch at 29–97 (RDLTEAVPRL…GVISRIEKMG (69 aa)) folds into the GRAM domain. A Myotubularin phosphatase domain is found at 163 to 538 (GWTVYNPVEE…RHLELWVNYY (376 aa)). A 1,2-diacyl-sn-glycero-3-phospho-(1D-myo-inositol-3,5-bisphosphate) is bound by residues Asn288, Asn313, and Ile314. A 1,2-diacyl-sn-glycero-3-phospho-(1D-myo-inositol-3-phosphate) contacts are provided by Asn288, Asn313, and Ile314. Residue Cys375 is the Phosphocysteine intermediate of the active site. Residues Ser376, Asp377, Gly378, Trp379, Asp380, Arg381, Lys417, and Arg421 each coordinate a 1,2-diacyl-sn-glycero-3-phospho-(1D-myo-inositol-3,5-bisphosphate). The a 1,2-diacyl-sn-glycero-3-phospho-(1D-myo-inositol-3-phosphate) site is built by Ser376, Asp377, Gly378, Trp379, Asp380, and Arg381. Arg421 serves as a coordination point for a 1,2-diacyl-sn-glycero-3-phospho-(1D-myo-inositol-3-phosphate). Residue Thr495 is modified to Phosphothreonine. The disordered stretch occupies residues 579–603 (SAKLSDPPTSPSSPSQMMPHVQTHF). The residue at position 588 (Ser588) is a Phosphoserine.

It belongs to the protein-tyrosine phosphatase family. Non-receptor class myotubularin subfamily. In terms of assembly, heterodimer with MTMR12. Interacts with KMT2A/MLL1 (via SET domain). Interacts with DES in skeletal muscle but not in cardiac muscle. Interacts with SPEG.

Its subcellular location is the cytoplasm. It localises to the cell membrane. The protein resides in the cell projection. It is found in the filopodium. The protein localises to the ruffle. Its subcellular location is the late endosome. It localises to the myofibril. The protein resides in the sarcomere. It catalyses the reaction a 1,2-diacyl-sn-glycero-3-phospho-(1D-myo-inositol-3-phosphate) + H2O = a 1,2-diacyl-sn-glycero-3-phospho-(1D-myo-inositol) + phosphate. The enzyme catalyses a 1,2-diacyl-sn-glycero-3-phospho-(1D-myo-inositol-3,5-bisphosphate) + H2O = a 1,2-diacyl-sn-glycero-3-phospho-(1D-myo-inositol-5-phosphate) + phosphate. The catalysed reaction is 1,2-dioctanoyl-sn-glycero-3-phospho-(1-D-myo-inositol-3-phosphate) + H2O = 1,2-dioctanoyl-sn-glycero-3-phospho-(1D-myo-inositol) + phosphate. It carries out the reaction 1,2-dioctanoyl-sn-glycero-3-phospho-(1D-myo-inositol-3,5-bisphosphate) + H2O = 1,2-dioctanoyl-sn-glycero-3-phospho-(1D-myo-inositol-5-phosphate) + phosphate. It catalyses the reaction 1,2-dihexadecanoyl-sn-glycero-3-phospho-(1D-myo-inositol-3,5-phosphate) + H2O = 1,2-dihexadecanoyl-sn-glycero-3-phospho-(1D-myo-inositol-5-phosphate) + phosphate. Allosterically activated by phosphatidylinositol 5-phosphate (PI5P). Its function is as follows. Lipid phosphatase which dephosphorylates phosphatidylinositol 3-monophosphate (PI3P) and phosphatidylinositol 3,5-bisphosphate (PI(3,5)P2). Has also been shown to dephosphorylate phosphotyrosine- and phosphoserine-containing peptides. Negatively regulates EGFR degradation through regulation of EGFR trafficking from the late endosome to the lysosome. Plays a role in vacuolar formation and morphology. Regulates desmin intermediate filament assembly and architecture. Plays a role in mitochondrial morphology and positioning. Required for skeletal muscle maintenance but not for myogenesis. In skeletal muscles, stabilizes MTMR12 protein levels. The chain is Myotubularin from Pongo abelii (Sumatran orangutan).